A 455-amino-acid chain; its full sequence is L-serine dehydratase (455 aa).

The protein belongs to the iron-sulfur dependent L-serine dehydratase family. Requires [4Fe-4S] cluster as cofactor.

The catalysed reaction is L-serine = pyruvate + NH4(+). The protein operates within carbohydrate biosynthesis; gluconeogenesis. In Helicobacter pylori (strain ATCC 700392 / 26695) (Campylobacter pylori), this protein is L-serine dehydratase (sdaA).